Here is a 276-residue protein sequence, read N- to C-terminus: 4-chlorobenzoyl coenzyme A dehalogenase-1 (276 aa).

66–71 (AGFDLE) lines the substrate pocket. The active-site Proton acceptor is H93. G117 is a binding site for substrate. The active-site Nucleophile is D148. R261 serves as a coordination point for substrate.

It belongs to the enoyl-CoA hydratase/isomerase family. As to quaternary structure, homotetramer.

The enzyme catalyses 4-chlorobenzoyl-CoA + H2O = 4-hydroxybenzoyl-CoA + chloride + H(+). The protein operates within xenobiotic degradation; 4-chlorobenzoate degradation; 4-hydroxybenzoate from 4-chlorobenzoate: step 2/3. Functionally, dehalogenates 4-chlorobenzoyl-CoA, 4-iodobenzoyl-CoA, 4-bromobenzoyl-CoA and, at a slower rate, 4-fluorobenzoyl-CoA. Does not dehalogenate 2-chlorobenzoyl-CoA or 3-chlorobenzoyl-CoA. The chain is 4-chlorobenzoyl coenzyme A dehalogenase-1 from Arthrobacter sp.